The following is a 507-amino-acid chain: Sterol 14-alpha demethylase CYP51A (507 aa).

The chain crosses the membrane as a helical span at residues 7–29 (YPLWVLVALFAVIIANLLYQQLP). Tyr-105 provides a ligand contact to lanosterol. Residue Cys-449 participates in heme binding.

Belongs to the cytochrome P450 family. It depends on heme as a cofactor.

The protein resides in the endoplasmic reticulum membrane. The catalysed reaction is a 14alpha-methyl steroid + 3 reduced [NADPH--hemoprotein reductase] + 3 O2 = a Delta(14) steroid + formate + 3 oxidized [NADPH--hemoprotein reductase] + 4 H2O + 4 H(+). It catalyses the reaction a 14alpha-methyl steroid + reduced [NADPH--hemoprotein reductase] + O2 = a 14alpha-hydroxymethyl steroid + oxidized [NADPH--hemoprotein reductase] + H2O + H(+). The enzyme catalyses a 14alpha-hydroxymethyl steroid + reduced [NADPH--hemoprotein reductase] + O2 = a 14alpha-formyl steroid + oxidized [NADPH--hemoprotein reductase] + 2 H2O + H(+). It carries out the reaction a 14alpha-formyl steroid + reduced [NADPH--hemoprotein reductase] + O2 = a Delta(14) steroid + formate + oxidized [NADPH--hemoprotein reductase] + H2O + 2 H(+). The catalysed reaction is lanosterol + 3 reduced [NADPH--hemoprotein reductase] + 3 O2 = 4,4-dimethyl-5alpha-cholesta-8,14,24-trien-3beta-ol + formate + 3 oxidized [NADPH--hemoprotein reductase] + 4 H2O + 4 H(+). It catalyses the reaction lanosterol + reduced [NADPH--hemoprotein reductase] + O2 = 32-hydroxylanosterol + oxidized [NADPH--hemoprotein reductase] + H2O + H(+). The enzyme catalyses 32-hydroxylanosterol + reduced [NADPH--hemoprotein reductase] + O2 = 32-oxolanosterol + oxidized [NADPH--hemoprotein reductase] + 2 H2O + H(+). It carries out the reaction 32-oxolanosterol + reduced [NADPH--hemoprotein reductase] + O2 = 4,4-dimethyl-5alpha-cholesta-8,14,24-trien-3beta-ol + formate + oxidized [NADPH--hemoprotein reductase] + H2O + 2 H(+). The catalysed reaction is eburicol + 3 reduced [NADPH--hemoprotein reductase] + 3 O2 = 14-demethyleburicol + formate + 3 oxidized [NADPH--hemoprotein reductase] + 4 H2O + 4 H(+). It catalyses the reaction eburicol + reduced [NADPH--hemoprotein reductase] + O2 = 32-hydroxyeburicol + oxidized [NADPH--hemoprotein reductase] + H2O + H(+). The enzyme catalyses 32-hydroxyeburicol + reduced [NADPH--hemoprotein reductase] + O2 = 32-oxoeburicol + oxidized [NADPH--hemoprotein reductase] + 2 H2O + H(+). It carries out the reaction 32-oxoeburicol + reduced [NADPH--hemoprotein reductase] + O2 = 14-demethyleburicol + formate + oxidized [NADPH--hemoprotein reductase] + H2O + 2 H(+). It participates in steroid metabolism; ergosterol biosynthesis. Functionally, together with cyp51B and cyp51C, encodes the sterol 14alpha-demethylase that plays a critical role in the third module of ergosterol biosynthesis pathway, being ergosterol the major sterol component in fungal membranes that participates in a variety of functions. CYP51A encodes the sterol 14-alpha-demethylase induced on ergosterol depletion and is responsible for the intrinsic variation in azole sensitivity. The third module or late pathway involves the ergosterol synthesis itself through consecutive reactions that mainly occur in the endoplasmic reticulum (ER) membrane. In filamentous fungi, during the initial step of this module, lanosterol (lanosta-8,24-dien-3beta-ol) can be metabolized to eburicol. Sterol 14alpha-demethylase catalyzes the three-step oxidative removal of the 14alpha-methyl group (C-32) of both these sterols in the form of formate, and converts eburicol and lanosterol to 14-demethyleburicol (4,4,24-trimethylergosta-8,14,24(28)-trienol) and 4,4-dimethyl-5alpha-cholesta-8,14,24-trien-3beta-ol, respectively, which are further metabolized by other enzymes in the pathway to ergosterol. Can also use substrates not intrinsic to fungi, such as 24,25-dihydrolanosterol (DHL), producing 4,4'-dimethyl-8,14-cholestadien-3-beta-ol, but at lower rates than the endogenous substrates. This chain is Sterol 14-alpha demethylase CYP51A, found in Gibberella zeae (strain ATCC MYA-4620 / CBS 123657 / FGSC 9075 / NRRL 31084 / PH-1) (Wheat head blight fungus).